We begin with the raw amino-acid sequence, 334 residues long: L-lactate dehydrogenase (334 aa).

The segment at 1 to 22 (MASTKGKLIHEMVPSKERDPPH) is disordered. A compositionally biased stretch (basic and acidic residues) spans 8-22 (LIHEMVPSKERDPPH). Residues 31 to 59 (GQVGMAAAISVLLRDLADELALVDVVEDR) and arginine 101 each bind NAD(+). The substrate site is built by arginine 108, asparagine 140, and arginine 171. NAD(+) is bound at residue asparagine 140. Histidine 195 (proton acceptor) is an active-site residue. Threonine 250 lines the substrate pocket.

The protein belongs to the LDH/MDH superfamily. LDH family. As to quaternary structure, homotetramer.

The protein localises to the cytoplasm. It carries out the reaction (S)-lactate + NAD(+) = pyruvate + NADH + H(+). It functions in the pathway fermentation; pyruvate fermentation to lactate; (S)-lactate from pyruvate: step 1/1. The chain is L-lactate dehydrogenase from Petromyzon marinus (Sea lamprey).